Here is a 395-residue protein sequence, read N- to C-terminus: Flap endonuclease 1 (395 aa).

Residues 1 to 104 (MGIKHLYQII…GELAKRFMRK (104 aa)) are N-domain. D34 provides a ligand contact to Mg(2+). DNA-binding residues include R47 and R70. Residues D86, E158, E160, D179, and D181 each coordinate Mg(2+). The segment at 122-253 (EVEKFSRRTV…NTALKLIRDH (132 aa)) is I-domain. DNA is bound at residue E158. Residues G231 and D233 each coordinate DNA. A Mg(2+)-binding site is contributed by D233. The segment at 341–349 (QQSRLEGFF) is interaction with PCNA. Residues 360–389 (AVLKRKHEEKLELQKKKKKEDAKAKKEAKS) show a composition bias toward basic and acidic residues. A disordered region spans residues 360–395 (AVLKRKHEEKLELQKKKKKEDAKAKKEAKSKPRGTT).

It belongs to the XPG/RAD2 endonuclease family. FEN1 subfamily. In terms of assembly, interacts with PCNA. Three molecules of FEN1 bind to one PCNA trimer with each molecule binding to one PCNA monomer. PCNA stimulates the nuclease activity without altering cleavage specificity. Mg(2+) is required as a cofactor. Post-translationally, phosphorylated. Phosphorylation upon DNA damage induces relocalization to the nuclear plasma.

The protein resides in the nucleus. Its subcellular location is the nucleolus. It localises to the nucleoplasm. It is found in the mitochondrion. Functionally, structure-specific nuclease with 5'-flap endonuclease and 5'-3' exonuclease activities involved in DNA replication and repair. During DNA replication, cleaves the 5'-overhanging flap structure that is generated by displacement synthesis when DNA polymerase encounters the 5'-end of a downstream Okazaki fragment. It enters the flap from the 5'-end and then tracks to cleave the flap base, leaving a nick for ligation. Also involved in the long patch base excision repair (LP-BER) pathway, by cleaving within the apurinic/apyrimidinic (AP) site-terminated flap. Acts as a genome stabilization factor that prevents flaps from equilibrating into structures that lead to duplications and deletions. Also possesses 5'-3' exonuclease activity on nicked or gapped double-stranded DNA, and exhibits RNase H activity. Also involved in replication and repair of rDNA and in repairing mitochondrial DNA. This Ajellomyces capsulatus (strain NAm1 / WU24) (Darling's disease fungus) protein is Flap endonuclease 1.